A 273-amino-acid polypeptide reads, in one-letter code: Photosystem I chlorophyll a/b-binding protein 3-1, chloroplastic (273 aa).

A chloroplast-targeting transit peptide spans 1–39 (MAAQALVSSSLTSSVQTARQIFGSKPVASASQKKSSFVV). Trp-56 lines the chlorophyll b pocket. Residues Phe-76, Ser-82, and Glu-100 each contribute to the chlorophyll a site. Chlorophyll b is bound at residue Arg-105. A helical membrane pass occupies residues 106-126 (FAMLGAAGAIAPEILGKAGLI). Chlorophyll b is bound at residue Ile-140. Residues 146–166 (YTYWADNYTLFVLEMALMGFA) traverse the membrane as a helical segment. Residues Glu-167 and Arg-170 each coordinate chlorophyll b. Residue Ser-195 is modified to Phosphoserine. Residues Lys-224, Glu-225, Asn-228, Arg-230, Gln-242, and His-257 each coordinate chlorophyll a. The chain crosses the membrane as a helical span at residues 231–251 (LAMLAILGYFIQGLVTGVGPY). Position 272 (Phe-272) interacts with chlorophyll b.

The protein belongs to the light-harvesting chlorophyll a/b-binding (LHC) protein family. As to quaternary structure, the LHC complex consists of chlorophyll a-b binding proteins. Red-emitting heterodimer with LHCA2. Interacts with LHCA5. Binds to carotenoids. Requires Binds at least 14 chlorophylls (8 Chl-a and 6 Chl-b) and carotenoids such as lutein and neoxanthin. as cofactor. Photoregulated by reversible phosphorylation of its threonine residues.

The protein resides in the plastid. The protein localises to the chloroplast thylakoid membrane. Functionally, the light-harvesting complex (LHC) functions as a light receptor, it captures and delivers excitation energy to photosystems with which it is closely associated, here photosystem I. This chain is Photosystem I chlorophyll a/b-binding protein 3-1, chloroplastic, found in Arabidopsis thaliana (Mouse-ear cress).